The following is a 188-amino-acid chain: ATP synthase subunit delta (188 aa).

It belongs to the ATPase delta chain family. In terms of assembly, F-type ATPases have 2 components, F(1) - the catalytic core - and F(0) - the membrane proton channel. F(1) has five subunits: alpha(3), beta(3), gamma(1), delta(1), epsilon(1). F(0) has three main subunits: a(1), b(2) and c(10-14). The alpha and beta chains form an alternating ring which encloses part of the gamma chain. F(1) is attached to F(0) by a central stalk formed by the gamma and epsilon chains, while a peripheral stalk is formed by the delta and b chains.

It localises to the cell inner membrane. In terms of biological role, f(1)F(0) ATP synthase produces ATP from ADP in the presence of a proton or sodium gradient. F-type ATPases consist of two structural domains, F(1) containing the extramembraneous catalytic core and F(0) containing the membrane proton channel, linked together by a central stalk and a peripheral stalk. During catalysis, ATP synthesis in the catalytic domain of F(1) is coupled via a rotary mechanism of the central stalk subunits to proton translocation. This protein is part of the stalk that links CF(0) to CF(1). It either transmits conformational changes from CF(0) to CF(1) or is implicated in proton conduction. The protein is ATP synthase subunit delta of Rhizobium etli (strain ATCC 51251 / DSM 11541 / JCM 21823 / NBRC 15573 / CFN 42).